Reading from the N-terminus, the 2115-residue chain is Nuclear mitotic apparatus protein 1 (2115 aa).

Residues 1–212 (MTLHATRGAA…SPMGDILQTP (212 aa)) are head (Globular). The residue at position 162 (Ser162) is a Phosphoserine. Thr163 is modified (phosphothreonine). 2 positions are modified to phosphoserine: Ser169 and Ser203. Thr211 is subject to Phosphothreonine. Residues 213–1699 (QFQMRRLKKQ…ADQQLRDLGK (1487 aa)) are a coiled coil. Residue Ser271 is modified to Phosphoserine. Lys379 is modified (N6-acetyllysine). Phosphoserine occurs at positions 388 and 395. Low complexity predominate over residues 549 to 560 (LRHQVEQLSSSL). 2 disordered regions span residues 549–593 (LRHQ…EERE) and 746–766 (LVEQ…GRKG). Residues 561–581 (KQKEQQLKEVAEKQEATRQDH) show a composition bias toward basic and acidic residues. Residue Ser820 is modified to Phosphoserine. An N6-acetyllysine modification is found at Lys891. 2 stretches are compositionally biased toward basic and acidic residues: residues 926-950 (AGEQ…RQPE) and 996-1013 (QEER…TQER). 2 disordered regions span residues 926-958 (AGEQ…QQGR) and 988-1013 (LMES…TQER). Thr1047 bears the Phosphothreonine; by PLK1 mark. Positions 1090–1102 (LKEQLAKKEKEHA) are enriched in basic and acidic residues. Disordered regions lie at residues 1090-1225 (LKEQ…RKNS) and 1275-1296 (ETAS…EVQS). Composition is skewed to low complexity over residues 1103 to 1112 (SGSGAQSEAA) and 1133 to 1142 (EQQCQKQQEQ). Positions 1145 to 1163 (SLERSLEAERASRAERDSA) are enriched in basic and acidic residues. Ser1187 is modified (phosphoserine). Basic and acidic residues predominate over residues 1198-1224 (KVQDHSKAEDEWKAQVARGRQEAERKN). Position 1225 is a phosphoserine (Ser1225). Basic and acidic residues predominate over residues 1283–1296 (AAERSSALREEVQS). At Lys1511 the chain carries N6-acetyllysine. Position 1601 is a phosphoserine (Ser1601). Residue Lys1699 forms a Glycyl lysine isopeptide (Lys-Gly) (interchain with G-Cter in SUMO2) linkage. Residues 1699–1876 (KFQVATDALK…NSALLSLPGY (178 aa)) are membrane-binding domain 1. The tail (Globular) stretch occupies residues 1700-2115 (FQVATDALKS…TPRAKGKAKH (416 aa)). Residues Ser1721, Ser1724, and Ser1728 each carry the phosphoserine modification. The segment at 1734-1761 (PLSITSKLPRTQPDGTSVPGEPASPISQ) is disordered. Positions 1735 to 1748 (LSITSKLPRTQPDG) are enriched in polar residues. The short motif at 1742–1748 (PRTQPDG) is the Tankyrase-binding domain element. 2 positions are modified to phosphoserine: Ser1757 and Ser1760. Residue Lys1766 forms a Glycyl lysine isopeptide (Lys-Gly) (interchain with G-Cter in SUMO1); alternate linkage. Lys1766 is covalently cross-linked (Glycyl lysine isopeptide (Lys-Gly) (interchain with G-Cter in SUMO2); alternate). Phosphoserine; by PLK1 occurs at positions 1769 and 1772. Tyr1774 carries the phosphotyrosine modification. Thr1776 bears the Phosphothreonine mark. Ser1788 is subject to Phosphoserine. Residues 1788 to 1810 (SSLDSLGDVFLDSGRKTRSARRR) are 4.1-binding domain. Ser1789 is modified (phosphoserine; by PLK1). Phosphoserine occurs at positions 1792 and 1800. Thr1804 carries the post-translational modification Phosphothreonine. Residue Lys1822 forms a Glycyl lysine isopeptide (Lys-Gly) (interchain with G-Cter in SUMO2) linkage. Disordered stretches follow at residues 1826–1901 (EEPD…GRNS) and 1955–2115 (EMKT…KAKH). Phosphoserine occurs at positions 1830 and 1833. The span at 1830 to 1857 (SANSSFYSTRSAPASQASLRATSSTQSL) shows a compositional bias: polar residues. Ser1834 carries the post-translational modification Phosphoserine; by PLK1. The residue at position 1836 (Tyr1836) is a Phosphotyrosine. Ser1840 carries the phosphoserine modification. Residue Ser1844 is modified to Phosphoserine; alternate. Ser1844 carries O-linked (GlcNAc) serine; alternate glycosylation. Phosphoserine occurs at positions 1862 and 1887. The span at 1879–1891 (TTRSSARRSQAGV) shows a compositional bias: polar residues. Positions 1882 to 1985 (SSARRSQAGV…AEGTGITTRQ (104 aa)) are tubulin-binding domain. The segment at 1892–1926 (SSGAPPGRNSFYMGTCQDEPEQLDDWNRIAELQQR) is GPSM2-binding domain. Residues 1955–1966 (EMKTGDPQETLR) are compositionally biased toward basic and acidic residues. Phosphoserine is present on Ser1969. The tract at residues 1981–2060 (ITTRQQRKRV…SILNTPKKLG (80 aa)) is membrane-binding domain 2. The Nuclear localization signal motif lies at 1984 to 1989 (RQQRKR). A Phosphoserine modification is found at Ser1991. At Thr2000 the chain carries Phosphothreonine. Ser2003 carries the post-translational modification Phosphoserine. Thr2015 carries the post-translational modification Phosphothreonine; by CDK1. Residues 2015-2032 (TPRDRHEGRKQSTTEAQK) are compositionally biased toward basic and acidic residues. Residue Ser2047 is modified to Phosphoserine. Position 2055 is a phosphothreonine; by CDK1 (Thr2055). Phosphoserine is present on residues Ser2062 and Ser2077. Ser2087 carries the post-translational modification Phosphoserine; by CDK1. A compositionally biased stretch (low complexity) spans 2089 to 2108 (RIATTTASAATAAAIGATPR). Thr2106 carries the post-translational modification Phosphothreonine; by CDK1.

As to quaternary structure, homodimer. Also forms multiarm oligomers by association of C-terminal tail domains, oligomers may further assemble to form a hexagonal nuclear lattice-like network. Associates with the dynein-dynactin complex; this association promotes the transport and accumulation of NUMA1 at the mitotic spindle poles that is inhibited by the BRISC complex in a PLK1-dependent manner. Part of a spindle orientation complex at least composed of GNAI1, GPSM2 and NUMA1. Interacts (via C-terminus) with microtubules (MTs); this interaction is direct and promotes both MT bundle formation and stability in a dynein-dynactin complex- and CDK1-independent manner. Interacts with EPB41 and EPB41L2; these interactions are negatively regulated by CDK1 during metaphase and are important for anaphase-specific localization of NUMA1 in symmetrically dividing cells. Interacts (via C-terminus) with GPSM2 (via TPR repeats); this interaction is direct, prevented by competitive binding of INSC, is inhibited in a PLK1-dependent manner, blocks the association of NUMA1 with MTs and inhibits NUMA1-induced MT bundle formation, prevents the association of NUMA1 with SPAG5, induces mitotic spindle pole localization of GPSM2, both metaphase cell cortex localization of NUMA1 and mitotic spindle organization. Does not interact with GPSM2 during anaphase. Interacts (via C-terminus) with the nuclear importin alpha/importin beta receptor; this interaction is inhibited by RanGTP. Interacts (via C-terminus) with KPNB1; this interaction is inhibited by RanGTP and the BRISC complex. Interacts with ABRAXAS2 and the BRISC complex; these interactions regulate mitotic spindle assembly. Interacts (via N-terminal end of the coiled-coil domain) with RAE1; this interaction promotes mitotic spindle formation. Interacts (via C-terminus) with SPAG5 (via C-terminus); this interaction promotes the recruitment of SPAG5 to the MTs at spindle poles in a dynein-dynactin-dependent manner and regulates mitotic spindle organization and proper chromosome alignment during mitosis. Interacts with TNKS; this interaction occurs at the onset of mitosis. Interacts with TNKS2. Interacts with tubulin. Interacts with KHDC3L (via C-terminus). Phosphorylation and dephosphorylation on Thr-2055 regulates the extent of cortical NUMA1 and the dynein-dynactin complex localization during mitotic metaphase and anaphase. In metaphase, phosphorylation on Thr-2055 occurs in a kinase CDK1-dependent manner; this phosphorylation maintains low levels of cortical dynein-dynactin complex at metaphase, and hence proper spindle positioning. In anaphase, dephosphorylated on Thr-2055 by phosphatase PPP2CA; this dephosphorylation stimulates its membrane association and with the dynein-dynactin complex its enrichment at the cell cortex, and hence robust spindle elongation. Probably also phosphorylated on Thr-2015 and Ser-2087 by CDK1; these phosphorylations may regulate its cell cortex recruitment during metaphase and anaphase. Phosphorylated on Thr-1047, Ser-1769, Ser-1772, Ser-1789 and Ser-1834 by PLK1; these phosphorylations induce cortical dynein-dynactin complex dissociation from the NUMA1-GPSM2 complex and negatively regulates cortical dynein-dynactin complex localization. Post-translationally, ADP-ribosylated by TNKS at the onset of mitosis; ADP-ribosylation is not required for its localization to spindle poles. In terms of processing, O-glycosylated during cytokinesis at sites identical or close to phosphorylation sites, this interferes with the phosphorylation status. Ubiquitinated with 'Lys-63'-linked polyubiquitin chains. Deubiquitination by the BRISC complex is important for the incorporation of NUMA1 into mitotic spindle poles and normal spindle pole function, probably by modulating interactions between NUMA1, dynein-dynactin complex and importin-beta.

Its subcellular location is the nucleus. The protein resides in the nucleoplasm. It localises to the nucleus matrix. The protein localises to the chromosome. It is found in the cytoplasm. Its subcellular location is the cytoskeleton. The protein resides in the microtubule organizing center. It localises to the centrosome. The protein localises to the spindle pole. It is found in the cell cortex. Its subcellular location is the cell membrane. The protein resides in the lateral cell membrane. It localises to the cytosol. Functionally, microtubule (MT)-binding protein that plays a role in the formation and maintenance of the spindle poles and the alignement and the segregation of chromosomes during mitotic cell division. Functions to tether the minus ends of MTs at the spindle poles, which is critical for the establishment and maintenance of the spindle poles. Plays a role in the establishment of the mitotic spindle orientation during metaphase and elongation during anaphase in a dynein-dynactin-dependent manner. In metaphase, part of a ternary complex composed of GPSM2 and G(i) alpha proteins, that regulates the recruitment and anchorage of the dynein-dynactin complex in the mitotic cell cortex regions situated above the two spindle poles, and hence regulates the correct oritentation of the mitotic spindle. During anaphase, mediates the recruitment and accumulation of the dynein-dynactin complex at the cell membrane of the polar cortical region through direct association with phosphatidylinositol 4,5-bisphosphate (PI(4,5)P2), and hence participates in the regulation of the spindle elongation and chromosome segregation. Also binds to other polyanionic phosphoinositides, such as phosphatidylinositol 3-phosphate (PIP), lysophosphatidic acid (LPA) and phosphatidylinositol triphosphate (PIP3), in vitro. Also required for proper orientation of the mitotic spindle during asymmetric cell divisions. Plays a role in mitotic MT aster assembly. Involved in anastral spindle assembly. Positively regulates TNKS protein localization to spindle poles in mitosis. Highly abundant component of the nuclear matrix where it may serve a non-mitotic structural role, occupies the majority of the nuclear volume. Required for epidermal differentiation and hair follicle morphogenesis. This Homo sapiens (Human) protein is Nuclear mitotic apparatus protein 1.